The sequence spans 150 residues: UPF0178 protein ASA_3749 (150 aa).

This sequence belongs to the UPF0178 family.

In Aeromonas salmonicida (strain A449), this protein is UPF0178 protein ASA_3749.